Here is a 52-residue protein sequence, read N- to C-terminus: MIPFPAQHEIFHAYIGRITPHSSRCIANMWHSAHFFHENSLSIMKTLVPWTL.

This is an uncharacterized protein from Saccharomyces cerevisiae (strain ATCC 204508 / S288c) (Baker's yeast).